The primary structure comprises 106 residues: Pyrimidine/purine nucleoside phosphorylase (106 aa).

This sequence belongs to the nucleoside phosphorylase PpnP family.

It carries out the reaction a purine D-ribonucleoside + phosphate = a purine nucleobase + alpha-D-ribose 1-phosphate. The enzyme catalyses adenosine + phosphate = alpha-D-ribose 1-phosphate + adenine. The catalysed reaction is cytidine + phosphate = cytosine + alpha-D-ribose 1-phosphate. It catalyses the reaction guanosine + phosphate = alpha-D-ribose 1-phosphate + guanine. It carries out the reaction inosine + phosphate = alpha-D-ribose 1-phosphate + hypoxanthine. The enzyme catalyses thymidine + phosphate = 2-deoxy-alpha-D-ribose 1-phosphate + thymine. The catalysed reaction is uridine + phosphate = alpha-D-ribose 1-phosphate + uracil. It catalyses the reaction xanthosine + phosphate = alpha-D-ribose 1-phosphate + xanthine. In terms of biological role, catalyzes the phosphorolysis of diverse nucleosides, yielding D-ribose 1-phosphate and the respective free bases. Can use uridine, adenosine, guanosine, cytidine, thymidine, inosine and xanthosine as substrates. Also catalyzes the reverse reactions. The chain is Pyrimidine/purine nucleoside phosphorylase from Paraburkholderia xenovorans (strain LB400).